We begin with the raw amino-acid sequence, 209 residues long: N-acetyltransferase aca1 (209 aa).

Residues 26–202 enclose the N-acetyltransferase domain; sequence TNVKNKEELL…DAYIYQYHFP (177 aa). Asparagine 118 is a binding site for substrate. 128 to 133 lines the CoA pocket; sequence RSKGIG. Residue 155 to 156 coordinates substrate; sequence NL.

Belongs to the acetyltransferase family. As to quaternary structure, homodimer.

The protein localises to the cytoplasm. The protein resides in the mitochondrion. The enzyme catalyses L-glutamate 5-semialdehyde + acetyl-CoA = N-acetyl-L-glutamate 5-semialdehyde + CoA + H(+). In terms of biological role, N-acetyltransferase involved in oxidative stress resistance. Acetylates the toxic proline metabolism intermediate (S)-1-pyrroline-5-carboxylate (P5C), or more likely its spontaneously forming tautomer glutamate-5-semialdehyde (GSA) into N-acetyl-GSA for arginine synthesis in the mitochondria. P5C has been shown to increase the levels of reactive oxygen species (ROS) in the cell by inhibiting the function of the respiratory chain in the mitochondria. The enzyme is able to reduce intracellular ROS levels under P5C-induced oxidative stress and protects cells from damage by oxidative stress. Also acetylates and thereby detoxifies the proline analog azetidine-2-carboxylate (AZC), however it is unlikely that AZC is a natural substrate as it occurs only in plants belonging to the Lilaceae family. This Schizosaccharomyces pombe (strain 972 / ATCC 24843) (Fission yeast) protein is N-acetyltransferase aca1.